Reading from the N-terminus, the 388-residue chain is P2X purinoceptor 4 (388 aa).

Over 1–33 (MTGCCTVLGAFLFEYDTPRIVLIRSRKVGLMNR) the chain is Cytoplasmic. A helical transmembrane segment spans residues 34–54 (TVQLLILAYVIGWVFVWEKGY). Over 55-338 (QETDSVVSSV…KFDIIPTMIN (284 aa)) the chain is Extracellular. Residues K67 and K69 each contribute to the ATP site. 2 residues coordinate CTP: K67 and K69. N75, N110, N131, N153, and N184 each carry an N-linked (GlcNAc...) asparagine glycan. 3 disulfide bridges follow: C116/C165, C126/C149, and C132/C159. Positions 186 and 188 each coordinate ATP. CTP is bound at residue T186. 2 N-linked (GlcNAc...) asparagine glycosylation sites follow: N199 and N208. 2 disulfide bridges follow: C217-C227 and C261-C270. Residues N293, R295, and K313 each coordinate ATP. Residues N293, R295, and K313 each coordinate CTP. A helical membrane pass occupies residues 339–359 (IGSGLALLGVATVLCDVIVLY). The Cytoplasmic segment spans residues 360–388 (CMKKRYYYREKKYKYVEDYEQGLGNQMEQ).

It belongs to the P2X receptor family. In terms of assembly, functional P2RXs are organized as homomeric and heteromeric trimers. Forms heterotrimer with P2RX1. Interacts with P2RX7 (via C-terminus); this interaction is functional only in the presence of ATP. Forms heterotrimer with P2RX4; functional differences between homomeric P2RX4 and P2RX4/6 heterotrimer are minor. Interacts with AP1M2.

It is found in the cell membrane. It localises to the lysosome membrane. The catalysed reaction is K(+)(in) = K(+)(out). It carries out the reaction Na(+)(in) = Na(+)(out). It catalyses the reaction Ca(2+)(in) = Ca(2+)(out). Activated by ATP. pH-dependent and inhibited by acidic pH. ATP-gated nonselective transmembrane cation channel permeable to potassium, sodium and calcium. CTP, but not GTP or UTP, functions as a weak affinity agonist for P2RX4. Activated by extracellularly released ATP, it plays multiple role in immunity and central nervous system physiology. Could also function as an ATP-gated cation channel of lysosomal membranes. This Bos taurus (Bovine) protein is P2X purinoceptor 4 (P2RX4).